The chain runs to 284 residues: MEMO1 family protein YG5714_2180 (284 aa).

This sequence belongs to the MEMO1 family.

This Saccharolobus islandicus (strain Y.G.57.14 / Yellowstone #1) (Sulfolobus islandicus) protein is MEMO1 family protein YG5714_2180.